A 282-amino-acid polypeptide reads, in one-letter code: ATP synthase gamma chain (282 aa).

It belongs to the ATPase gamma chain family. F-type ATPases have 2 components, CF(1) - the catalytic core - and CF(0) - the membrane proton channel. CF(1) has five subunits: alpha(3), beta(3), gamma(1), delta(1), epsilon(1). CF(0) has three main subunits: a, b and c.

It is found in the cell membrane. Functionally, produces ATP from ADP in the presence of a proton gradient across the membrane. The gamma chain is believed to be important in regulating ATPase activity and the flow of protons through the CF(0) complex. The sequence is that of ATP synthase gamma chain from Clostridium botulinum (strain Kyoto / Type A2).